The sequence spans 334 residues: Adenine deaminase (334 aa).

Residues His17, His19, and His197 each contribute to the Zn(2+) site. Glu200 functions as the Proton donor in the catalytic mechanism. Position 278 (Asp278) interacts with Zn(2+). Residue Asp279 coordinates substrate.

Belongs to the metallo-dependent hydrolases superfamily. Adenosine and AMP deaminases family. Adenine deaminase type 2 subfamily. The cofactor is Zn(2+).

The enzyme catalyses adenine + H2O + H(+) = hypoxanthine + NH4(+). Its function is as follows. Catalyzes the hydrolytic deamination of adenine to hypoxanthine. Plays an important role in the purine salvage pathway and in nitrogen catabolism. This is Adenine deaminase from Rhodospirillum rubrum (strain ATCC 11170 / ATH 1.1.1 / DSM 467 / LMG 4362 / NCIMB 8255 / S1).